The chain runs to 211 residues: ATP phosphoribosyltransferase (211 aa).

It belongs to the ATP phosphoribosyltransferase family. Short subfamily. As to quaternary structure, heteromultimer composed of HisG and HisZ subunits.

The protein localises to the cytoplasm. It catalyses the reaction 1-(5-phospho-beta-D-ribosyl)-ATP + diphosphate = 5-phospho-alpha-D-ribose 1-diphosphate + ATP. Its pathway is amino-acid biosynthesis; L-histidine biosynthesis; L-histidine from 5-phospho-alpha-D-ribose 1-diphosphate: step 1/9. Functionally, catalyzes the condensation of ATP and 5-phosphoribose 1-diphosphate to form N'-(5'-phosphoribosyl)-ATP (PR-ATP). Has a crucial role in the pathway because the rate of histidine biosynthesis seems to be controlled primarily by regulation of HisG enzymatic activity. In Sorangium cellulosum (strain So ce56) (Polyangium cellulosum (strain So ce56)), this protein is ATP phosphoribosyltransferase.